The primary structure comprises 125 residues: Alpha-endosulfine (125 aa).

A compositionally biased stretch (basic and acidic residues) spans 1–37 (MSDKYIGDSHLEETGEEKQDSQEKEAVTPEKAEEQKL). A disordered region spans residues 1-52 (MSDKYIGDSHLEETGEEKQDSQEKEAVTPEKAEEQKLKAKYPNLGQKPGGSD). Threonine 28 carries the post-translational modification Phosphothreonine; by CDK2. Serine 67 carries the phosphoserine; by GWL modification. A disordered region spans residues 86-107 (GPDKNLVTGDHIPTPQDLPQRK). A Phosphothreonine; by CDK2 modification is found at threonine 99. Residue serine 109 is modified to Phosphoserine; by PKA.

Belongs to the endosulfine family. Interacts (when phosphorylated at Ser-67) with ppp2r2d. Phosphorylation at Ser-67 by gwl during mitosis is essential for interaction with PPP2R2D (PR55-delta) and subsequent inactivation of PP2A. Phosphorylated by PKA.

It localises to the cytoplasm. Functionally, protein phosphatase inhibitor that specifically inhibits protein phosphatase 2A (PP2A) during mitosis. When phosphorylated at Ser-67 during mitosis, specifically interacts with ppp2r2d (PR55-delta) and inhibits its activity, leading to inactivation of PP2A, an essential condition to keep cyclin-B1-CDK1 activity high during M phase. This is Alpha-endosulfine (ensa) from Xenopus laevis (African clawed frog).